The chain runs to 314 residues: Putative S-adenosyl-L-methionine-dependent methyltransferase MAV_4441 (314 aa).

S-adenosyl-L-methionine is bound by residues Asp138 and 167-168; that span reads DL.

The protein belongs to the UPF0677 family.

In terms of biological role, exhibits S-adenosyl-L-methionine-dependent methyltransferase activity. This is Putative S-adenosyl-L-methionine-dependent methyltransferase MAV_4441 from Mycobacterium avium (strain 104).